We begin with the raw amino-acid sequence, 100 residues long: Large ribosomal subunit protein uL23 (100 aa).

Belongs to the universal ribosomal protein uL23 family. Part of the 50S ribosomal subunit. Contacts protein L29, and trigger factor when it is bound to the ribosome.

One of the early assembly proteins it binds 23S rRNA. One of the proteins that surrounds the polypeptide exit tunnel on the outside of the ribosome. Forms the main docking site for trigger factor binding to the ribosome. The polypeptide is Large ribosomal subunit protein uL23 (Aeromonas salmonicida (strain A449)).